Reading from the N-terminus, the 348-residue chain is MTKPYGSSLDDHLDAEVAREPSLADTAATIRALAAAAIDVSETVGRGSLAGDLAAQGEHNSDGDVQKALDVIAHKRFMQALEEAPVAQVASEEAEDVVTLKAGAPLAVAIDPLDGSSNIGVGMVVGTIFGIRPVTPGEDPNASFLTPGTTQTAAGFVVYGPATTFVVTLGNGTRIFTLDRTDNVFRLTHDAMKIVPSASEYAINASNVRHWDGPVKSYIEDCLRGSEGPRDRDFNMRWTAALVADAQRVLIRGGVFLYPGDNRKGYAQGRLRLLYETAPIAFLIEQAGGGATDGQGRILERVATKIHERSPLVFGSTEEVECVAKYYDGRQPSAGRSPLFGQRGLMRS.

4 residues coordinate Mg(2+): Glu92, Asp111, Leu113, and Asp114. Residues 114–117 (DGSS) and Asn204 contribute to the substrate site. Glu276 is a Mg(2+) binding site.

The protein belongs to the FBPase class 1 family. Homotetramer. The cofactor is Mg(2+).

The protein resides in the cytoplasm. It catalyses the reaction beta-D-fructose 1,6-bisphosphate + H2O = beta-D-fructose 6-phosphate + phosphate. Its pathway is carbohydrate biosynthesis; gluconeogenesis. This is Fructose-1,6-bisphosphatase class 1 from Methylorubrum extorquens (strain CM4 / NCIMB 13688) (Methylobacterium extorquens).